The following is a 423-amino-acid chain: Mannose-6-phosphate isomerase (423 aa).

Alanine 2 is modified (N-acetylalanine). Phosphoserine is present on residues serine 102 and serine 108. Positions 110, 112, 137, and 276 each coordinate Zn(2+). Residue arginine 295 is part of the active site.

This sequence belongs to the mannose-6-phosphate isomerase type 1 family. The cofactor is Zn(2+). In terms of tissue distribution, expressed in all tissues, but more abundant in heart, brain and skeletal muscle.

It localises to the cytoplasm. The enzyme catalyses D-mannose 6-phosphate = D-fructose 6-phosphate. It participates in nucleotide-sugar biosynthesis; GDP-alpha-D-mannose biosynthesis; alpha-D-mannose 1-phosphate from D-fructose 6-phosphate: step 1/2. Functionally, isomerase that catalyzes the interconversion of fructose-6-P and mannose-6-P and has a critical role in the supply of D-mannose derivatives required for many eukaryotic glycosylation reactions. In Homo sapiens (Human), this protein is Mannose-6-phosphate isomerase.